The sequence spans 32 residues: Cyclotide glopa B (32 aa).

The segment at residues 1-32 is a cross-link (cyclopeptide (Gly-Asn)); that stretch reads GGSVPCIETCVWTGCFLVPGCSCKSDKKCYLN. 3 disulfides stabilise this stretch: Cys6-Cys21, Cys10-Cys23, and Cys15-Cys29.

This is a cyclic peptide.

In terms of biological role, probably participates in a plant defense mechanism. The sequence is that of Cyclotide glopa B from Gloeospermum pauciflorum.